The sequence spans 345 residues: MCSQEGEGYSLLKEYANGFMVSQVLFAACELGVFELLAEALEPLDSAAVSSHLGSSPQGTELLLNTCVSLKLLQADVRGGKAVYANTELASTYLVRGSPRSQRDMLLYAGRTAYVCWRHLAEAVREGRNQYLKAFGIPSEELFSAIYRSEDERLQFMQGLQDVWRLEGATVLAAFDLSPFPLICDLGGGSGALAKACVSLYPGCRAIVFDIPGVVQIAKRHFSASEDERISFHEGDFFKDALPEADLYILARVLHDWTDAKCSHLLQRVYRACRTGGGILVIESLLDTDGRGPLTTLLYSLNMLVQTEGRERTPAEYRALLGPAGFRDVRCRRTGGTYDAVLARK.

Residues Tyr-147, Trp-164, Asp-210, 235–237 (GDF), and Arg-252 contribute to the S-adenosyl-L-methionine site. The Proton donor/acceptor role is filled by His-255. The substrate site is built by Asp-256, Asn-302, and Gln-306.

Belongs to the class I-like SAM-binding methyltransferase superfamily. Cation-independent O-methyltransferase family. In terms of assembly, homodimer. Expressed in the pineal gland (at protein level). Not detectable in retina, nor in liver.

The enzyme catalyses N-acetylserotonin + S-adenosyl-L-methionine = melatonin + S-adenosyl-L-homocysteine + H(+). It functions in the pathway aromatic compound metabolism; melatonin biosynthesis; melatonin from serotonin: step 1/2. Functionally, catalyzes the transfer of a methyl group onto N-acetylserotonin, producing melatonin (N-acetyl-5-methoxytryptamine). The polypeptide is Acetylserotonin O-methyltransferase (ASMT) (Bos taurus (Bovine)).